Reading from the N-terminus, the 167-residue chain is uncharacterized protein (167 aa).

Residues 1 to 148 enclose the N-acetyltransferase domain; that stretch reads MLIRVEIPID…SAFQVHRLAD (148 aa).

It belongs to the acetyltransferase family.

This is an uncharacterized protein from Escherichia coli O157:H7.